The sequence spans 155 residues: Transcription antitermination protein NusB (155 aa).

This sequence belongs to the NusB family.

Functionally, involved in transcription antitermination. Required for transcription of ribosomal RNA (rRNA) genes. Binds specifically to the boxA antiterminator sequence of the ribosomal RNA (rrn) operons. This chain is Transcription antitermination protein NusB, found in Aliivibrio fischeri (strain ATCC 700601 / ES114) (Vibrio fischeri).